A 548-amino-acid chain; its full sequence is Transcriptional adapter ADA2a (548 aa).

The disordered stretch occupies residues 1–30; it reads MGRSKLASRPAEEDLNPGKSKRKKISLGPE. A ZZ-type zinc finger spans residues 48-104; sequence PGLYCCNYCDKDLSGLVRFKCAVCMDFDLCVECFSVGVELNRHKNSHPYRVMDNLSF. Positions 53, 56, 68, 71, 77, 80, 90, and 94 each coordinate Zn(2+). An SANT domain is found at 106 to 158; that stretch reads LVTSDWNADEEILLLEAIATYGFGNWKEVADHVGSKTTTECIKHFNSAYMQSP. The residue at position 257 (K257) is an N6-acetyllysine; by GCN5. The stretch at 365-386 forms a coiled coil; that stretch reads QSKEEHKELIKKVIEEHQILRR. The SWIRM domain maps to 461 to 548; it reads PRIYSGLDTW…LVHKGIGDST (88 aa).

In terms of assembly, interacts in vitro with the HAT domain of GCN5 and with the DNA-binding domain of the transcriptional activator DREB1B/CBF1. Acetylated in vitro by GCN5, but acetylation is not essential for biological activity. In terms of tissue distribution, expressed in roots and leaves.

The protein resides in the nucleus. Required for the function of some acidic activation domains, which activate transcription from a distant site. The exact mechanism of action is not yet known. ADA2 stimulates the acetyltransferase activity of GCN5 on free histones or nucleosomes, probably by opening up the promoter region. This chain is Transcriptional adapter ADA2a (ADA2A), found in Arabidopsis thaliana (Mouse-ear cress).